Here is an 872-residue protein sequence, read N- to C-terminus: DNA polymerase 1 (872 aa).

The protein belongs to the DNA polymerase type-B family.

The catalysed reaction is DNA(n) + a 2'-deoxyribonucleoside 5'-triphosphate = DNA(n+1) + diphosphate. The chain is DNA polymerase 1 (pol-alpha) from Sulfurisphaera ohwakuensis.